Here is a 215-residue protein sequence, read N- to C-terminus: Large ribosomal subunit protein uL16 (215 aa).

Residues 1 to 22 (MGRRPARCYRQPKGKPYPKSRY) form a disordered region.

The protein belongs to the universal ribosomal protein uL16 family.

The protein is Large ribosomal subunit protein uL16 (RPL10) of Tetrahymena thermophila (strain SB210).